The sequence spans 308 residues: Ribosomal RNA small subunit methyltransferase H (308 aa).

S-adenosyl-L-methionine-binding positions include 36 to 38 (GGH), D55, F86, D103, and Q110.

Belongs to the methyltransferase superfamily. RsmH family.

It localises to the cytoplasm. The enzyme catalyses cytidine(1402) in 16S rRNA + S-adenosyl-L-methionine = N(4)-methylcytidine(1402) in 16S rRNA + S-adenosyl-L-homocysteine + H(+). Functionally, specifically methylates the N4 position of cytidine in position 1402 (C1402) of 16S rRNA. In Helicobacter pylori (strain HPAG1), this protein is Ribosomal RNA small subunit methyltransferase H.